Reading from the N-terminus, the 68-residue chain is Antimicrobial peptide UyCT3 (68 aa).

The N-terminal stretch at 1-23 (MKNQFVLLLLAIVFLQMIFQSDA) is a signal peptide. Residue phenylalanine 36 is modified to Phenylalanine amide. A propeptide spanning residues 40–68 (GLENMDKFDELFDGDLSEADLDFLKELMR) is cleaved from the precursor.

This sequence belongs to the non-disulfide-bridged peptide (NDBP) superfamily. Short antimicrobial peptide (group 4) family. In terms of processing, the non-amidated UyCT3 does not show antimicrobial activity. Expressed by the venom gland.

The protein localises to the secreted. It is found in the target cell membrane. In terms of biological role, antimicrobial peptide that inhibits the growth of Gram-positive (S.aureus, MIC=10 uM) and Gram-negative bacteria (E.coli, MIC=15 uM and P.aeruginosa, MIC=6 uM). It also shows 35% of hemolysis when 15 uM are tested (95% at 50 uM). This Urodacus yaschenkoi (Inland robust scorpion) protein is Antimicrobial peptide UyCT3.